The sequence spans 181 residues: Large ribosomal subunit protein bL17 (181 aa).

The segment at 129–181 is disordered; it reads AEKSEKSAKTAKAAKAPAKKATAKKASTKAVAAKKKAVKKAQKKDRAASAARA. A compositionally biased stretch (basic residues) spans 145–171; it reads PAKKATAKKASTKAVAAKKKAVKKAQK.

The protein belongs to the bacterial ribosomal protein bL17 family. As to quaternary structure, part of the 50S ribosomal subunit. Contacts protein L32.

This Bdellovibrio bacteriovorus (strain ATCC 15356 / DSM 50701 / NCIMB 9529 / HD100) protein is Large ribosomal subunit protein bL17.